The sequence spans 239 residues: Pyridoxine 5'-phosphate synthase (239 aa).

N7 contributes to the 3-amino-2-oxopropyl phosphate binding site. 1-deoxy-D-xylulose 5-phosphate is bound at residue 9 to 10 (DH). R18 contacts 3-amino-2-oxopropyl phosphate. H43 serves as the catalytic Proton acceptor. R45 and H50 together coordinate 1-deoxy-D-xylulose 5-phosphate. E70 acts as the Proton acceptor in catalysis. T100 contributes to the 1-deoxy-D-xylulose 5-phosphate binding site. H191 acts as the Proton donor in catalysis. 3-amino-2-oxopropyl phosphate-binding positions include G192 and 213–214 (GH).

It belongs to the PNP synthase family. As to quaternary structure, homooctamer; tetramer of dimers.

It is found in the cytoplasm. The catalysed reaction is 3-amino-2-oxopropyl phosphate + 1-deoxy-D-xylulose 5-phosphate = pyridoxine 5'-phosphate + phosphate + 2 H2O + H(+). It participates in cofactor biosynthesis; pyridoxine 5'-phosphate biosynthesis; pyridoxine 5'-phosphate from D-erythrose 4-phosphate: step 5/5. Functionally, catalyzes the complicated ring closure reaction between the two acyclic compounds 1-deoxy-D-xylulose-5-phosphate (DXP) and 3-amino-2-oxopropyl phosphate (1-amino-acetone-3-phosphate or AAP) to form pyridoxine 5'-phosphate (PNP) and inorganic phosphate. This Synechococcus sp. (strain JA-2-3B'a(2-13)) (Cyanobacteria bacterium Yellowstone B-Prime) protein is Pyridoxine 5'-phosphate synthase.